Reading from the N-terminus, the 685-residue chain is Protein SPT2 homolog (685 aa).

The tract at residues 1–570 (MDFREILMIA…PPLSGYRAAQ (570 aa)) is important for interaction with DNA. Lys-37 participates in a covalent cross-link: Glycyl lysine isopeptide (Lys-Gly) (interchain with G-Cter in SUMO2). A coiled-coil region spans residues 45–81 (QAFLKRKEEELRRKALEEKRRKEELVKKRIELKHDKK). Positions 79-168 (DKKARAMAKR…PLKSAPPPMN (90 aa)) are disordered. The span at 101–111 (IEEKSKKRQAT) shows a compositional bias: basic and acidic residues. Residues 123–148 (YEMEEENEFLEYNHAESEQEYEEEQE) are a coiled coil. Residue Lys-187 forms a Glycyl lysine isopeptide (Lys-Gly) (interchain with G-Cter in SUMO2) linkage. Composition is skewed to basic and acidic residues over residues 188-209 (VVKK…EFLE) and 260-275 (HAEK…EKHL). Disordered stretches follow at residues 188–615 (VVKK…QEEI) and 644–685 (SWKE…LKRR). Ser-278 bears the Phosphoserine mark. Composition is skewed to low complexity over residues 317 to 330 (SSTS…TSAS), 365 to 385 (SPGV…PSTG), and 402 to 415 (GSSS…ISGS). Residues 416–431 (KKPTNDSNPSRRTVSG) are compositionally biased toward polar residues. The span at 435 to 501 (PGQPASSSGG…PGRSISGSIP (67 aa)) shows a compositional bias: low complexity. Ser-471 carries the phosphoserine modification. Residues 519–529 (GPGQTVSSSGP) are compositionally biased toward polar residues. The segment covering 542 to 553 (ISSKNIISRSSN) has biased composition (low complexity). Positions 571-685 (GPQRLPFPTG…RRRAKKLKRR (115 aa)) are important for interaction with histones. Lys-582 carries the N6-acetyllysine modification. Acidic residues predominate over residues 587 to 613 (YEEEDDDDDEYDSEMEDFIEDEGEPQE). The residue at position 599 (Ser-599) is a Phosphoserine. Composition is skewed to basic and acidic residues over residues 644–655 (SWKEQQKEEAKS) and 666–676 (EMRREEEEMQR). Residues 645–685 (WKEQQKEEAKSLRLGMQEDLEEMRREEEEMQRRRAKKLKRR) are a coiled coil.

It belongs to the SPT2 family. As to quaternary structure, interacts with histones. Interacts with a heterotetrameric complex formed by histone H3 and H4, especially when the histone tetramer is not bound to DNA. Interacts with histone H3.3.

The protein resides in the nucleus. It is found in the nucleolus. Histone chaperone that stabilizes pre-existing histone tetramers and regulates replication-independent histone exchange on chromatin. Required for normal chromatin refolding in the coding region of transcribed genes, and for the suppression of spurious transcription. Binds DNA and histones and promotes nucleosome assembly (in vitro). Facilitates formation of tetrameric histone complexes containing histone H3 and H4. Modulates RNA polymerase 1-mediated transcription. Binds DNA, with a preference for branched DNA species, such as Y-form DNA and Holliday junction DNA. The chain is Protein SPT2 homolog (SPTY2D1) from Homo sapiens (Human).